A 957-amino-acid polypeptide reads, in one-letter code: Glycine dehydrogenase (decarboxylating) (957 aa).

Lysine 702 carries the post-translational modification N6-(pyridoxal phosphate)lysine.

This sequence belongs to the GcvP family. The glycine cleavage system is composed of four proteins: P, T, L and H. Requires pyridoxal 5'-phosphate as cofactor.

The enzyme catalyses N(6)-[(R)-lipoyl]-L-lysyl-[glycine-cleavage complex H protein] + glycine + H(+) = N(6)-[(R)-S(8)-aminomethyldihydrolipoyl]-L-lysyl-[glycine-cleavage complex H protein] + CO2. Its function is as follows. The glycine cleavage system catalyzes the degradation of glycine. The P protein binds the alpha-amino group of glycine through its pyridoxal phosphate cofactor; CO(2) is released and the remaining methylamine moiety is then transferred to the lipoamide cofactor of the H protein. This chain is Glycine dehydrogenase (decarboxylating), found in Bradyrhizobium sp. (strain BTAi1 / ATCC BAA-1182).